We begin with the raw amino-acid sequence, 314 residues long: MKKVVILLNMGGADDLSQVELFLKNMFNDPYILGIKNRKIRSVLAWLITKMRLKSATRNYTELGGKSPIGDITRSLIDKLNIKFGNENLTFDYAMNYTPPFAIDSLKKYKYADEILLFPLYPHHSRTTIVSSLDSANRAIKELSIKSNIKVINYFYKDERYNKIITSSIKEKIAEMNSSQIDLIFSSHSLPKKIIEKGDLYETHTNEHVKIISDMLAKDGVKFNSISLAYQSRLGPVEWLGPNLSEVLSNLKSKKALIYPISFCIDNSETDFELDIEYRKIADQKEFDYYEVVKAPDDSEAFVDYIAYKVKELV.

Fe cation contacts are provided by His-188 and Glu-269.

Belongs to the ferrochelatase family.

The protein resides in the cytoplasm. The enzyme catalyses heme b + 2 H(+) = protoporphyrin IX + Fe(2+). The protein operates within porphyrin-containing compound metabolism; protoheme biosynthesis; protoheme from protoporphyrin-IX: step 1/1. Functionally, catalyzes the ferrous insertion into protoporphyrin IX. The polypeptide is Ferrochelatase (Campylobacter fetus subsp. fetus (strain 82-40)).